We begin with the raw amino-acid sequence, 212 residues long: 3-isopropylmalate dehydratase small subunit (212 aa).

Belongs to the LeuD family. LeuD type 1 subfamily. In terms of assembly, heterodimer of LeuC and LeuD.

It carries out the reaction (2R,3S)-3-isopropylmalate = (2S)-2-isopropylmalate. The protein operates within amino-acid biosynthesis; L-leucine biosynthesis; L-leucine from 3-methyl-2-oxobutanoate: step 2/4. In terms of biological role, catalyzes the isomerization between 2-isopropylmalate and 3-isopropylmalate, via the formation of 2-isopropylmaleate. The polypeptide is 3-isopropylmalate dehydratase small subunit (Thioalkalivibrio sulfidiphilus (strain HL-EbGR7)).